The chain runs to 403 residues: Ubiquitin-like modifier-activating enzyme 5 (403 aa).

ATP contacts are provided by Gly-81, Asp-102, Lys-125, Asn-148, and Asn-182. Zn(2+)-binding residues include Cys-224 and Cys-227. The active-site Glycyl thioester intermediate is Cys-248. Zn(2+)-binding residues include Cys-301 and Cys-306. Residues 306-315 (CRKQQEEYKK) show a composition bias toward basic and acidic residues. The tract at residues 306–337 (CRKQQEEYKKRAPAQPTQETAPQEEEEVVHED) is disordered. Residues 333–345 (VVHEDNEWGIELV) carry the UFM1-interacting sequence (UIS) motif. The segment at 346 to 376 (SEVSEEELKNSSGPVPTLPEGITVAYTVPKK) is linker. 2 positions are modified to phosphoserine: Ser-357 and Ser-392. The UFC1-binding sequence (UFC) signature appears at 388-403 (DSGESLEDLMARMKKM).

The protein belongs to the ubiquitin-activating E1 family. UBA5 subfamily. As to quaternary structure, homodimer; homodimerization is required for UFM1 activation. Interacts (via UIS motif) with UFM1; binds UFM1 via a trans-binding mechanism in which UFM1 interacts with distinct sites in both subunits of the UBA5 homodimer. Interacts (via C-terminus) with UFC1. Interacts (via UIS motif) with GABARAPL2 and, with lower affinity, with GABARAP and GABARAPL1.

It is found in the cytoplasm. It localises to the nucleus. Its subcellular location is the endoplasmic reticulum membrane. The protein localises to the golgi apparatus. Functionally, E1-like enzyme which specifically catalyzes the first step in ufmylation. Activates UFM1 by first adenylating its C-terminal glycine residue with ATP, and thereafter linking this residue to the side chain of a cysteine residue in E1, yielding a UFM1-E1 thioester and free AMP. Activates UFM1 via a trans-binding mechanism, in which UFM1 interacts with distinct sites in both subunits of the UBA5 homodimer. Trans-binding also promotes stabilization of the UBA5 homodimer, and enhances ATP-binding. Transfer of UFM1 from UBA5 to the E2-like enzyme UFC1 also takes place using a trans mechanism. Ufmylation plays a key role in various processes, such as ribosome recycling, response to DNA damage, interferon response or reticulophagy (also called ER-phagy). Ufmylation is essential for erythroid differentiation of both megakaryocytes and erythrocytes. This Rattus norvegicus (Rat) protein is Ubiquitin-like modifier-activating enzyme 5.